Here is a 253-residue protein sequence, read N- to C-terminus: Indole-3-glycerol phosphate synthase (253 aa).

Belongs to the TrpC family.

It catalyses the reaction 1-(2-carboxyphenylamino)-1-deoxy-D-ribulose 5-phosphate + H(+) = (1S,2R)-1-C-(indol-3-yl)glycerol 3-phosphate + CO2 + H2O. It participates in amino-acid biosynthesis; L-tryptophan biosynthesis; L-tryptophan from chorismate: step 4/5. This is Indole-3-glycerol phosphate synthase from Bacillus thuringiensis (strain Al Hakam).